We begin with the raw amino-acid sequence, 963 residues long: Low-density lipoprotein receptor-related protein 8 (963 aa).

A signal peptide spans 1 to 32 (MGLPEPGPLRLLALLLLLLLLLLLQLQHLAAA). Topologically, residues 42–826 (GPAKDCEKDQ…SKMGSTVTAA (785 aa)) are extracellular. 7 consecutive LDL-receptor class A domains span residues 46–82 (DCEK…DDCP), 85–123 (TCAD…ATCT), 126–164 (VCPA…AGCA), 166–202 (LCAP…RGCA), 205–246 (ACGP…ELCG), 258–295 (ACAT…ADCP), and 298–334 (TCRG…AGCL). 27 disulfides stabilise this stretch: Cys-47-Cys-59, Cys-54-Cys-72, Cys-66-Cys-81, Cys-86-Cys-98, Cys-93-Cys-111, Cys-105-Cys-122, Cys-127-Cys-141, Cys-134-Cys-154, Cys-148-Cys-163, Cys-167-Cys-179, Cys-174-Cys-192, Cys-186-Cys-201, Cys-206-Cys-221, Cys-213-Cys-234, Cys-228-Cys-245, Cys-259-Cys-272, Cys-267-Cys-285, Cys-279-Cys-294, Cys-299-Cys-311, Cys-306-Cys-324, Cys-318-Cys-333, Cys-340-Cys-351, Cys-347-Cys-360, Cys-362-Cys-374, Cys-380-Cys-390, Cys-386-Cys-399, and Cys-401-Cys-414. Ca(2+) is bound by residues Trp-64, Asp-67, Asp-69, Asp-71, Asp-77, and Glu-78. Residue Asn-176 is glycosylated (N-linked (GlcNAc...) asparagine). An EGF-like 1 domain is found at 336–375 (GLNECLHNNGGCSHICTDLKIGFECTCPAGFQLLDQKTCG). The EGF-like 2; calcium-binding domain maps to 376–415 (DIDECKDPDACSQICVNYKGYFKCECYPGYEMDLLTKNCK). A glycan (N-linked (GlcNAc...) asparagine) is linked at Asn-441. LDL-receptor class B repeat units follow at residues 462–508 (NRIY…DWVH), 509–551 (KHIY…DPLR), 552–595 (GFMY…DLLS), 596–639 (QRLY…VFED), and 640–681 (KVFW…FHEL). Asn-518 and Asn-538 each carry an N-linked (GlcNAc...) asparagine glycan. Positions 740–798 (STSTTTLASTMTRTVPATTRAPGTTVHRSTYQNHSTETPSLTAAVPSSVSVPRAPSISP) are clustered O-linked oligosaccharides. Residues 754–815 (VPATTRAPGT…SNHSQHYANE (62 aa)) are disordered. The span at 765–777 (VHRSTYQNHSTET) shows a compositional bias: polar residues. Asn-772 carries an N-linked (GlcNAc...) asparagine glycan. Low complexity predominate over residues 778 to 799 (PSLTAAVPSSVSVPRAPSISPS). The span at 800–812 (TLSPATSNHSQHY) shows a compositional bias: polar residues. Asn-807 is a glycosylation site (N-linked (GlcNAc...) asparagine). Residues 827-847 (VIGIIVPIVVIALLCMSGYLI) traverse the membrane as a helical segment. Residues 848–963 (WRNWKRKNTK…ALSLEDDGLP (116 aa)) are Cytoplasmic-facing.

Belongs to the LDLR family. In terms of assembly, homooligomer. Interacts with VLDLR. Reelin associates with two or more receptor molecules. Interacts with DAB1 and JNK-interacting proteins. Interacts with SNX17. Interacts with PCSK9. Interacts with MDK; this interaction is calcium dependent. Interacts with CLU. (Microbial infection) Interacts with Semliki Forest virus E2-E1 heterodimer; this interaction mediates viral entry to host cell. As to quaternary structure, (Microbial infection) Interacts (via class A repeats) with Eastern equine encephalitis virus spike glycoprotein E2; this interaction mediates viral entry into host cell. In terms of processing, O-glycosylated. Some alternatively spliced isoforms lack the O-linked sugar domain. Undergoes sequential, furin and gamma-secretase dependent, proteolytic processing, resulting in the extracellular release of the entire ligand-binding domain as a soluble polypeptide and in the intracellular domain (ICD) release into the cytoplasm. The gamma-secretase-dependent proteolytical processing occurs after the bulk of the extracellular domain has been shed, in a furin-dependent manner, in alternatively spliced isoforms carrying the furin cleavage site. Hypoglycosylation (mainly hypo-O-glycosylation) leads to increased extracellular cleavage, which in turn results in accelerating release of the intracellular domain (ICD) by the gamma-secretase. The resulting receptor fragment is able to inhibit Reelin signaling and in particular the Reelin-induced DAB1 phosphorylation. Post-translationally, tyrosine phosphorylated upon apoE binding. In terms of processing, ubiquitinated by MYLIP leading to degradation. In terms of tissue distribution, expressed mainly in brain and placenta. Also expressed in platelets and megakaryocytic cells. Not expressed in the liver.

The protein localises to the cell membrane. The protein resides in the secreted. In terms of biological role, cell surface receptor for Reelin (RELN) and apolipoprotein E (apoE)-containing ligands. LRP8 participates in transmitting the extracellular Reelin signal to intracellular signaling processes, by binding to DAB1 on its cytoplasmic tail. Reelin acts via both the VLDL receptor (VLDLR) and LRP8 to regulate DAB1 tyrosine phosphorylation and microtubule function in neurons. LRP8 has higher affinity for Reelin than VLDLR. LRP8 is thus a key component of the Reelin pathway which governs neuronal layering of the forebrain during embryonic brain development. Binds the endoplasmic reticulum resident receptor-associated protein (RAP). Binds dimers of beta 2-glycoprotein I and may be involved in the suppression of platelet aggregation in the vasculature. Highly expressed in the initial segment of the epididymis, where it affects the functional expression of clusterin and phospholipid hydroperoxide glutathione peroxidase (PHGPx), two proteins required for sperm maturation. May also function as an endocytic receptor. Not required for endocytic uptake of SEPP1 in the kidney which is mediated by LRP2. Together with its ligand, apolipoprotein E (apoE), may indirectly play a role in the suppression of the innate immune response by controlling the survival of myeloid-derived suppressor cells. Functionally, (Microbial infection) Acts as a receptor for Semliki Forest virus. In Homo sapiens (Human), this protein is Low-density lipoprotein receptor-related protein 8 (LRP8).